A 62-amino-acid chain; its full sequence is uncharacterized protein (62 aa).

This is an uncharacterized protein from Saccharomyces cerevisiae (strain ATCC 204508 / S288c) (Baker's yeast).